A 131-amino-acid polypeptide reads, in one-letter code: Small ribosomal subunit protein eS6 (131 aa).

This sequence belongs to the eukaryotic ribosomal protein eS6 family.

In Halobacterium salinarum (strain ATCC 29341 / DSM 671 / R1), this protein is Small ribosomal subunit protein eS6.